The primary structure comprises 71 residues: Exodeoxyribonuclease 7 small subunit (71 aa).

Belongs to the XseB family. As to quaternary structure, heterooligomer composed of large and small subunits.

The protein resides in the cytoplasm. It carries out the reaction Exonucleolytic cleavage in either 5'- to 3'- or 3'- to 5'-direction to yield nucleoside 5'-phosphates.. In terms of biological role, bidirectionally degrades single-stranded DNA into large acid-insoluble oligonucleotides, which are then degraded further into small acid-soluble oligonucleotides. This chain is Exodeoxyribonuclease 7 small subunit, found in Streptococcus equi subsp. zooepidemicus (strain H70).